The following is a 226-amino-acid chain: MIHLVDYALLKPYLTVDEAVAGARKAEELGVAAYCVNPIYAPVVRPLLRKVKLCVVADFPFGALPTASRIALVSRLAEVADEIDVVAPIGLVKSRRWAEVRRDLISVVGAAGGRVVKVITEEPYLRDEERYTLYDIIAEAGAHFIKSSTGFAEEAYAARQGNPVHSTPERAAAIARYIKEKGYRLGVKMAGGIRTREQAKAIVDAIGWGEDPARVRLGTSTPEALL.

Asp84 serves as the catalytic Proton donor/acceptor. Lys146 (schiff-base intermediate with acetaldehyde) is an active-site residue. The active-site Proton donor/acceptor is Lys188.

Belongs to the DeoC/FbaB aldolase family. DeoC type 1 subfamily. In terms of assembly, homodimer.

It localises to the cytoplasm. It catalyses the reaction 2-deoxy-D-ribose 5-phosphate = D-glyceraldehyde 3-phosphate + acetaldehyde. Its pathway is carbohydrate degradation; 2-deoxy-D-ribose 1-phosphate degradation; D-glyceraldehyde 3-phosphate and acetaldehyde from 2-deoxy-alpha-D-ribose 1-phosphate: step 2/2. Its function is as follows. Catalyzes a reversible aldol reaction between acetaldehyde and D-glyceraldehyde 3-phosphate to generate 2-deoxy-D-ribose 5-phosphate. In Pyrobaculum aerophilum (strain ATCC 51768 / DSM 7523 / JCM 9630 / CIP 104966 / NBRC 100827 / IM2), this protein is Deoxyribose-phosphate aldolase.